Reading from the N-terminus, the 872-residue chain is Alanine--tRNA ligase (872 aa).

Zn(2+)-binding residues include H567, H571, C669, and H673.

It belongs to the class-II aminoacyl-tRNA synthetase family. It depends on Zn(2+) as a cofactor.

The protein resides in the cytoplasm. It carries out the reaction tRNA(Ala) + L-alanine + ATP = L-alanyl-tRNA(Ala) + AMP + diphosphate. Functionally, catalyzes the attachment of alanine to tRNA(Ala) in a two-step reaction: alanine is first activated by ATP to form Ala-AMP and then transferred to the acceptor end of tRNA(Ala). Also edits incorrectly charged Ser-tRNA(Ala) and Gly-tRNA(Ala) via its editing domain. The sequence is that of Alanine--tRNA ligase from Streptococcus pyogenes serotype M1.